The chain runs to 702 residues: Ribosomal RNA large subunit methyltransferase K/L (702 aa).

The THUMP domain occupies 43–154 (LIYQSLMWSR…KETASIALDL (112 aa)).

It belongs to the methyltransferase superfamily. RlmKL family.

The protein resides in the cytoplasm. The catalysed reaction is guanosine(2445) in 23S rRNA + S-adenosyl-L-methionine = N(2)-methylguanosine(2445) in 23S rRNA + S-adenosyl-L-homocysteine + H(+). It carries out the reaction guanosine(2069) in 23S rRNA + S-adenosyl-L-methionine = N(2)-methylguanosine(2069) in 23S rRNA + S-adenosyl-L-homocysteine + H(+). Specifically methylates the guanine in position 2445 (m2G2445) and the guanine in position 2069 (m7G2069) of 23S rRNA. This Salmonella paratyphi B (strain ATCC BAA-1250 / SPB7) protein is Ribosomal RNA large subunit methyltransferase K/L.